We begin with the raw amino-acid sequence, 108 residues long: Replication restart protein PriB (108 aa).

Positions 8–108 (VDNRFSLIGK…LHAEQIEFIE (101 aa)) constitute an SSB domain.

Belongs to the PriB family. In terms of assembly, homodimer. Interacts with PriA and DnaT. Component of the replication restart primosome. Primosome assembly occurs via a 'hand-off' mechanism. PriA binds to replication forks, subsequently PriB then DnaT bind; DnaT then displaces ssDNA to generate the helicase loading substrate.

In terms of biological role, involved in the restart of stalled replication forks, which reloads the replicative helicase on sites other than the origin of replication; the PriA-PriB pathway is the major replication restart pathway. During primosome assembly it facilitates complex formation between PriA and DnaT on DNA; stabilizes PriA on DNA. Stimulates the DNA unwinding activity of PriA helicase. This is Replication restart protein PriB from Histophilus somni (strain 2336) (Haemophilus somnus).